Here is a 258-residue protein sequence, read N- to C-terminus: Thiazole synthase (258 aa).

Catalysis depends on K98, which acts as the Schiff-base intermediate with DXP. 1-deoxy-D-xylulose 5-phosphate-binding positions include G159, 185 to 186 (AG), and 207 to 208 (NT).

The protein belongs to the ThiG family. As to quaternary structure, homotetramer. Forms heterodimers with either ThiH or ThiS.

Its subcellular location is the cytoplasm. The catalysed reaction is [ThiS sulfur-carrier protein]-C-terminal-Gly-aminoethanethioate + 2-iminoacetate + 1-deoxy-D-xylulose 5-phosphate = [ThiS sulfur-carrier protein]-C-terminal Gly-Gly + 2-[(2R,5Z)-2-carboxy-4-methylthiazol-5(2H)-ylidene]ethyl phosphate + 2 H2O + H(+). It functions in the pathway cofactor biosynthesis; thiamine diphosphate biosynthesis. Catalyzes the rearrangement of 1-deoxy-D-xylulose 5-phosphate (DXP) to produce the thiazole phosphate moiety of thiamine. Sulfur is provided by the thiocarboxylate moiety of the carrier protein ThiS. In vitro, sulfur can be provided by H(2)S. This chain is Thiazole synthase, found in Bacillus cereus (strain ATCC 14579 / DSM 31 / CCUG 7414 / JCM 2152 / NBRC 15305 / NCIMB 9373 / NCTC 2599 / NRRL B-3711).